Consider the following 123-residue polypeptide: uncharacterized protein (123 aa).

A helical membrane pass occupies residues 5–25 (GTLVIIFAIVLILCIMLLFFY). Positions 32 to 53 (KSGVLPPPIPPPTPPPPKKKYD) are disordered. The span at 36 to 47 (LPPPIPPPTPPP) shows a compositional bias: pro residues.

The protein belongs to the asfivirus CP123L family.

Its subcellular location is the host membrane. It is found in the virion. This is an uncharacterized protein from Ornithodoros (relapsing fever ticks).